We begin with the raw amino-acid sequence, 437 residues long: MSSVVVVGAQWGDEGKGKIVDLLTKYSDYIVRFQGGNNAGHTLVVDGKKFVFHIIPSGILYEEKTCMIGNGVILDPGVLLEEMASLKERGLEVKPNRLMISDNAHLIMPYHSQLDQAKESALSASNKIGTTGRGIGPCYMDKVGRVGIKAGDLLDEDLFREKLRCAIEEKNFILTKKFGAPAVDFDSVYRQFMDFAEQLSPYFGNVSVTLDEARRADKNILFEGAQGTQLDIDHGTYPFVTSSNTVAGNACAGSGFGPSHIDAVVGIVKAYTTRVGSGPFPTELFDEKGEELQNKGSEFGATTGRRRRCGWFDGVVANDAVRLNGLTGWALTKLDVLSGQKSIKMASSYDLNGKKLHAMPNNIKDAEALKPVYEEVPGWADEVDGICNYDDLPTEAKDYVRRIEDFTGVPANIVSVGPDRAQTMMLSNPFETKKCCK.

Residues 12–18 and 40–42 contribute to the GTP site; these read GDEGKGK and GHT. The Proton acceptor role is filled by Asp-13. The Mg(2+) site is built by Asp-13 and Gly-40. IMP contacts are provided by residues 13–16, 38–41, Thr-131, Arg-145, Gln-226, Thr-241, and Arg-305; these read DEGK and NAGH. The Proton donor role is filled by His-41. Residue 301-307 coordinates substrate; that stretch reads ATTGRRR. Residues Arg-307, 333–335, and 415–417 each bind GTP; these read KLD and SVG.

This sequence belongs to the adenylosuccinate synthetase family. In terms of assembly, homodimer. Requires Mg(2+) as cofactor.

It is found in the cytoplasm. It catalyses the reaction IMP + L-aspartate + GTP = N(6)-(1,2-dicarboxyethyl)-AMP + GDP + phosphate + 2 H(+). It participates in purine metabolism; AMP biosynthesis via de novo pathway; AMP from IMP: step 1/2. In terms of biological role, plays an important role in the de novo pathway of purine nucleotide biosynthesis. Catalyzes the first committed step in the biosynthesis of AMP from IMP. The chain is Adenylosuccinate synthetase from Desulfotalea psychrophila (strain LSv54 / DSM 12343).